Here is a 92-residue protein sequence, read N- to C-terminus: MICAVYKSGRRADTYLFVKKRDVFDDVPEPLMEMFGSKTLVMIVPLSKRDHLGIADIDKVKVALVEQGYYLQIPPPQINLLEQHKQELAFKK.

The 85-residue stretch at 1–85 (MICAVYKSGR…PQINLLEQHK (85 aa)) folds into the YcgL domain.

The sequence is that of YcgL domain-containing protein Sfri_1738 from Shewanella frigidimarina (strain NCIMB 400).